The following is a 194-amino-acid chain: MISRLTGKLVEKNPPQIVIDVNGVGYEADVSMQTFYNLPPVGESVQLFTQLIIREDAHLLFGFATAEERKTFRQLIKVSGIGAKTALGILSAMTADELAQAVAEEDVKRLSSAPGIGKKTAERMVLELRGKLVAHAVTDGLFAAAPAADETEDIVGTLLALGYSEREAKAAVKGVPKGTDVGEGVRLALKNLLK.

A domain I region spans residues 1 to 64 (MISRLTGKLV…EDAHLLFGFA (64 aa)). A domain II region spans residues 65-143 (TAEERKTFRQ…AHAVTDGLFA (79 aa)). The flexible linker stretch occupies residues 144 to 147 (AAPA). Residues 147–194 (AADETEDIVGTLLALGYSEREAKAAVKGVPKGTDVGEGVRLALKNLLK) are domain III.

This sequence belongs to the RuvA family. Homotetramer. Forms an RuvA(8)-RuvB(12)-Holliday junction (HJ) complex. HJ DNA is sandwiched between 2 RuvA tetramers; dsDNA enters through RuvA and exits via RuvB. An RuvB hexamer assembles on each DNA strand where it exits the tetramer. Each RuvB hexamer is contacted by two RuvA subunits (via domain III) on 2 adjacent RuvB subunits; this complex drives branch migration. In the full resolvosome a probable DNA-RuvA(4)-RuvB(12)-RuvC(2) complex forms which resolves the HJ.

The protein localises to the cytoplasm. Its function is as follows. The RuvA-RuvB-RuvC complex processes Holliday junction (HJ) DNA during genetic recombination and DNA repair, while the RuvA-RuvB complex plays an important role in the rescue of blocked DNA replication forks via replication fork reversal (RFR). RuvA specifically binds to HJ cruciform DNA, conferring on it an open structure. The RuvB hexamer acts as an ATP-dependent pump, pulling dsDNA into and through the RuvAB complex. HJ branch migration allows RuvC to scan DNA until it finds its consensus sequence, where it cleaves and resolves the cruciform DNA. This Neisseria meningitidis serogroup C / serotype 2a (strain ATCC 700532 / DSM 15464 / FAM18) protein is Holliday junction branch migration complex subunit RuvA.